We begin with the raw amino-acid sequence, 175 residues long: ATP-dependent protease subunit HslV (175 aa).

The active site involves Thr2. Na(+) contacts are provided by Gly158, Cys161, and Thr164.

The protein belongs to the peptidase T1B family. HslV subfamily. A double ring-shaped homohexamer of HslV is capped on each side by a ring-shaped HslU homohexamer. The assembly of the HslU/HslV complex is dependent on binding of ATP.

The protein resides in the cytoplasm. The catalysed reaction is ATP-dependent cleavage of peptide bonds with broad specificity.. Its activity is regulated as follows. Allosterically activated by HslU binding. Protease subunit of a proteasome-like degradation complex believed to be a general protein degrading machinery. This Haemophilus influenzae (strain PittGG) protein is ATP-dependent protease subunit HslV.